The chain runs to 517 residues: T-complex protein 11-like protein 2 (517 aa).

Residues 1-59 (MPFNGEKQCVSEDQQSDSESSRFAEGVASLSDYECSRQSFTSDSSSKSSSPASTSPPRG) form a disordered region. A Phosphoserine modification is found at Ser-16. The segment covering 36-55 (SRQSFTSDSSSKSSSPASTS) has biased composition (low complexity).

The protein belongs to the TCP11 family. In terms of assembly, interacts with FMNL2; this interaction promotes muscle-derived satellite cell (MDSC) migration and differentiation.

It localises to the cytoplasm. It is found in the cytoskeleton. Promotes the migration of muscle-derived satellite cells (MDSCs) during differentiation throught interaction with FMNL2 and therefore may participate in microfilament assembly. The polypeptide is T-complex protein 11-like protein 2 (Mus musculus (Mouse)).